The sequence spans 104 residues: PTS system lactose-specific EIIA component (104 aa).

Residues 1-102 (MNRDEVQLLG…MKHLIELYKK (102 aa)) enclose the PTS EIIA type-3 domain. Catalysis depends on His-78, which acts as the Tele-phosphohistidine intermediate. His-78 is subject to Phosphohistidine; by HPr. Asp-81 contributes to the Mg(2+) binding site.

As to quaternary structure, homotrimer. Mg(2+) is required as a cofactor.

The protein resides in the cytoplasm. Functionally, the phosphoenolpyruvate-dependent sugar phosphotransferase system (sugar PTS), a major carbohydrate active transport system, catalyzes the phosphorylation of incoming sugar substrates concomitantly with their translocation across the cell membrane. The enzyme II LacEF PTS system is involved in lactose transport. This chain is PTS system lactose-specific EIIA component, found in Staphylococcus epidermidis (strain ATCC 35984 / DSM 28319 / BCRC 17069 / CCUG 31568 / BM 3577 / RP62A).